Consider the following 99-residue polypeptide: Plastocyanin (99 aa).

The Plastocyanin-like domain maps to 1 to 99 (LDVLLGGDDG…AGMVGKVTVN (99 aa)). The Cu cation site is built by histidine 37, cysteine 84, histidine 87, and methionine 92.

Belongs to the plastocyanin family. Cu(2+) serves as cofactor.

The protein resides in the plastid. It localises to the chloroplast thylakoid membrane. In terms of biological role, participates in electron transfer between P700 and the cytochrome b6-f complex in photosystem I. The chain is Plastocyanin (PETE) from Solanum tuberosum (Potato).